Here is a 391-residue protein sequence, read N- to C-terminus: Acetylgalactosaminyl-O-glycosyl-glycoprotein beta-1,3-N-acetylglucosaminyltransferase (391 aa).

Topologically, residues 1-11 (MALPSSRRFKS) are cytoplasmic. Residues 12-32 (PTTLAFFLVGVTLVVLNQWFL) traverse the membrane as a helical; Signal-anchor for type II membrane protein segment. The Lumenal portion of the chain corresponds to 33–391 (QEHRQEKAKG…TAGEQNPDAH (359 aa)). Asn-68 and Asn-191 each carry an N-linked (GlcNAc...) asparagine glycan.

Belongs to the glycosyltransferase 31 family.

The protein resides in the golgi apparatus membrane. It carries out the reaction a 3-O-[N-acetyl-alpha-D-galactosaminyl]-L-threonyl-[protein] + UDP-N-acetyl-alpha-D-glucosamine = a 3-O-[N-acetyl-beta-D-glucosaminyl-(1-&gt;3)-N-acetyl-alpha-D-galactosaminyl]-L-threonyl-[protein] + UDP + H(+). The catalysed reaction is a 3-O-[N-acetyl-alpha-D-galactosaminyl]-L-seryl-[protein] + UDP-N-acetyl-alpha-D-glucosamine = 3-O-[N-acetyl-beta-D-glucosaminyl-(1-&gt;3)-N-acetyl-alpha-D-galactosaminyl]-L-seryl-[protein] + UDP + H(+). It functions in the pathway protein modification; protein glycosylation. Its function is as follows. Beta-1,3-N-acetylglucosaminyltransferase that synthesizes the core 3 structure of the O-glycan, an important precursor in the biosynthesis of mucin-type glycoproteins. Plays an important role in the synthesis of mucin-type O-glycans in digestive organs. The protein is Acetylgalactosaminyl-O-glycosyl-glycoprotein beta-1,3-N-acetylglucosaminyltransferase (B3gnt6) of Mus musculus (Mouse).